The sequence spans 618 residues: Chaperone protein HscA homolog (618 aa).

This sequence belongs to the heat shock protein 70 family.

Its function is as follows. Chaperone involved in the maturation of iron-sulfur cluster-containing proteins. Has a low intrinsic ATPase activity which is markedly stimulated by HscB. The chain is Chaperone protein HscA homolog from Methylibium petroleiphilum (strain ATCC BAA-1232 / LMG 22953 / PM1).